The following is a 128-amino-acid chain: Photosystem II reaction center Psb28 protein (128 aa).

A disordered region spans residues 109–128 (SGLGYSQDSGEAPASDSSNG). Polar residues predominate over residues 111 to 128 (LGYSQDSGEAPASDSSNG).

Belongs to the Psb28 family. As to quaternary structure, part of the photosystem II complex.

It is found in the cellular thylakoid membrane. The protein is Photosystem II reaction center Psb28 protein of Synechococcus sp. (strain CC9311).